Consider the following 884-residue polypeptide: Endoribonuclease ysh1 (884 aa).

Residues histidine 83, histidine 85, aspartate 87, histidine 88, histidine 174, and aspartate 195 each coordinate Zn(2+). The Proton donor role is filled by histidine 446. Residue histidine 468 coordinates Zn(2+). Disordered regions lie at residues 595–626 (EIGT…EEIP), 678–705 (PASV…LKFL), and 734–780 (PIER…QDPD). The segment covering 605–619 (EDQQSESEEKQRMKE) has biased composition (basic and acidic residues). Positions 684–695 (SAKHNKHHHHHH) are enriched in basic residues. Over residues 742–758 (SSTESATTTTNGNGNSK) the composition is skewed to low complexity. The span at 762–780 (EQLSSLESKTDGATPQDPD) shows a compositional bias: polar residues.

Belongs to the metallo-beta-lactamase superfamily. RNA-metabolizing metallo-beta-lactamase-like family. CPSF2/YSH1 subfamily.

Its subcellular location is the nucleus. Component of the cleavage factor I (CF I) involved in pre-mRNA 3'-end processing. This chain is Endoribonuclease ysh1 (ysh1), found in Emericella nidulans (strain FGSC A4 / ATCC 38163 / CBS 112.46 / NRRL 194 / M139) (Aspergillus nidulans).